Reading from the N-terminus, the 483-residue chain is Protein nucleotidyltransferase YdiU (483 aa).

Residues G87, G89, R90, K110, D122, G123, R173, and R180 each contribute to the ATP site. The active-site Proton acceptor is the D249. Residues N250 and D259 each coordinate Mg(2+). D259 lines the ATP pocket.

The protein belongs to the SELO family. It depends on Mg(2+) as a cofactor. Mn(2+) is required as a cofactor.

The enzyme catalyses L-seryl-[protein] + ATP = 3-O-(5'-adenylyl)-L-seryl-[protein] + diphosphate. The catalysed reaction is L-threonyl-[protein] + ATP = 3-O-(5'-adenylyl)-L-threonyl-[protein] + diphosphate. It catalyses the reaction L-tyrosyl-[protein] + ATP = O-(5'-adenylyl)-L-tyrosyl-[protein] + diphosphate. It carries out the reaction L-histidyl-[protein] + UTP = N(tele)-(5'-uridylyl)-L-histidyl-[protein] + diphosphate. The enzyme catalyses L-seryl-[protein] + UTP = O-(5'-uridylyl)-L-seryl-[protein] + diphosphate. The catalysed reaction is L-tyrosyl-[protein] + UTP = O-(5'-uridylyl)-L-tyrosyl-[protein] + diphosphate. In terms of biological role, nucleotidyltransferase involved in the post-translational modification of proteins. It can catalyze the addition of adenosine monophosphate (AMP) or uridine monophosphate (UMP) to a protein, resulting in modifications known as AMPylation and UMPylation. The sequence is that of Protein nucleotidyltransferase YdiU from Yersinia pseudotuberculosis serotype O:1b (strain IP 31758).